Consider the following 263-residue polypeptide: Heat-labile enterotoxin IIB, A chain (263 aa).

The signal sequence occupies residues 1–20 (MAKVISFFISLFLISFPLYA). 26–39 (ADSRTPDEVRRSGG) is an NAD(+) binding site. Residue glutamate 130 is part of the active site. Cysteine 205 and cysteine 217 are joined by a disulfide.

It belongs to the enterotoxin A family. As to quaternary structure, heterohexamer of one A chain and of five B chains.

The biological activity of the toxin is produced by the A chain, which activates intracellular adenyl cyclase. This Escherichia coli protein is Heat-labile enterotoxin IIB, A chain.